A 194-amino-acid polypeptide reads, in one-letter code: Probable GTP-binding protein EngB (194 aa).

An EngB-type G domain is found at 22–194 (DLPEYALAGR…AWQFIKEGME (173 aa)). Residues 30–37 (GRSNVGKS), 57–61 (GKTQT), 75–78 (DVPG), 142–145 (TKAD), and 174–176 (FSS) contribute to the GTP site. 2 residues coordinate Mg(2+): S37 and T59.

The protein belongs to the TRAFAC class TrmE-Era-EngA-EngB-Septin-like GTPase superfamily. EngB GTPase family. The cofactor is Mg(2+).

Its function is as follows. Necessary for normal cell division and for the maintenance of normal septation. The chain is Probable GTP-binding protein EngB from Listeria innocua serovar 6a (strain ATCC BAA-680 / CLIP 11262).